The sequence spans 476 residues: Ribulose bisphosphate carboxylase large chain (476 aa).

Substrate is bound by residues N124 and T174. Residue K176 is the Proton acceptor of the active site. K178 is a binding site for substrate. Mg(2+) contacts are provided by K202, D204, and E205. K202 carries the post-translational modification N6-carboxylysine. H295 (proton acceptor) is an active-site residue. Residues R296, H328, and S380 each coordinate substrate.

Belongs to the RuBisCO large chain family. Type I subfamily. Heterohexadecamer of 8 large chains and 8 small chains; disulfide-linked. The disulfide link is formed within the large subunit homodimers. The cofactor is Mg(2+). In terms of processing, the disulfide bond which can form in the large chain dimeric partners within the hexadecamer appears to be associated with oxidative stress and protein turnover.

Its subcellular location is the carboxysome. The catalysed reaction is 2 (2R)-3-phosphoglycerate + 2 H(+) = D-ribulose 1,5-bisphosphate + CO2 + H2O. The enzyme catalyses D-ribulose 1,5-bisphosphate + O2 = 2-phosphoglycolate + (2R)-3-phosphoglycerate + 2 H(+). In terms of biological role, ruBisCO catalyzes two reactions: the carboxylation of D-ribulose 1,5-bisphosphate, the primary event in carbon dioxide fixation, as well as the oxidative fragmentation of the pentose substrate in the photorespiration process. Both reactions occur simultaneously and in competition at the same active site. This chain is Ribulose bisphosphate carboxylase large chain, found in Acaryochloris marina (strain MBIC 11017).